A 473-amino-acid polypeptide reads, in one-letter code: Tryptophanase (473 aa).

Lysine 270 is modified (N6-(pyridoxal phosphate)lysine).

Belongs to the beta-eliminating lyase family. Homotetramer. Pyridoxal 5'-phosphate is required as a cofactor.

It carries out the reaction L-tryptophan + H2O = indole + pyruvate + NH4(+). It participates in amino-acid degradation; L-tryptophan degradation via pyruvate pathway; indole and pyruvate from L-tryptophan: step 1/1. The sequence is that of Tryptophanase from Vibrio vulnificus (strain CMCP6).